An 86-amino-acid chain; its full sequence is Large ribosomal subunit protein bL27 (86 aa).

Gly residues predominate over residues 1-10; it reads MAQKKGGGST. Residues 1-21 are disordered; that stretch reads MAQKKGGGSTRNGRDSESKRL.

This sequence belongs to the bacterial ribosomal protein bL27 family.

This is Large ribosomal subunit protein bL27 from Ralstonia nicotianae (strain ATCC BAA-1114 / GMI1000) (Ralstonia solanacearum).